The sequence spans 403 residues: Tyrosine--tRNA ligase (403 aa).

The 'HIGH' region signature appears at 43-52 (PTAPDLHLGH). The 'KMSKS' region signature appears at 227-231 (KMSKS). Lysine 230 lines the ATP pocket. One can recognise an S4 RNA-binding domain in the interval 338-399 (LPIAQLLKQT…GKRKFARVTI (62 aa)).

The protein belongs to the class-I aminoacyl-tRNA synthetase family. TyrS type 2 subfamily. Homodimer.

It is found in the cytoplasm. It catalyses the reaction tRNA(Tyr) + L-tyrosine + ATP = L-tyrosyl-tRNA(Tyr) + AMP + diphosphate + H(+). In terms of biological role, catalyzes the attachment of tyrosine to tRNA(Tyr) in a two-step reaction: tyrosine is first activated by ATP to form Tyr-AMP and then transferred to the acceptor end of tRNA(Tyr). This is Tyrosine--tRNA ligase from Nitrosospira multiformis (strain ATCC 25196 / NCIMB 11849 / C 71).